The chain runs to 179 residues: Large ribosomal subunit protein uL5 (179 aa).

It belongs to the universal ribosomal protein uL5 family. In terms of assembly, part of the 50S ribosomal subunit; part of the 5S rRNA/L5/L18/L25 subcomplex. Contacts the 5S rRNA and the P site tRNA. Forms a bridge to the 30S subunit in the 70S ribosome.

Functionally, this is one of the proteins that bind and probably mediate the attachment of the 5S RNA into the large ribosomal subunit, where it forms part of the central protuberance. In the 70S ribosome it contacts protein S13 of the 30S subunit (bridge B1b), connecting the 2 subunits; this bridge is implicated in subunit movement. Contacts the P site tRNA; the 5S rRNA and some of its associated proteins might help stabilize positioning of ribosome-bound tRNAs. In Dichelobacter nodosus (strain VCS1703A), this protein is Large ribosomal subunit protein uL5.